A 455-amino-acid polypeptide reads, in one-letter code: Hexokinase-2 (455 aa).

The 443-residue stretch at 3 to 445 folds into the Hexokinase domain; that stretch reads ANFQQAVKKL…SGIGAALCAL (443 aa). The segment at 57–195 is hexokinase small subdomain; the sequence is TGAETGDFLA…NLPIRIEAVI (139 aa). 68–73 provides a ligand contact to ATP; that stretch reads DFGGTN. Substrate is bound by residues 144-145, 161-162, and 196-197; these read SY, TK, and ND. A hexokinase large subdomain region spans residues 196–434; sequence NDTVGTLVTR…KLISIGIAKD (239 aa). An ATP-binding site is contributed by threonine 222. Substrate-binding residues include asparagine 225, glutamate 252, and glutamate 283. Residues 288–289, 325–329, and 400–404 each bind ATP; these read GM, TSVLS, and SLVEH.

It belongs to the hexokinase family. In terms of assembly, monomer.

It catalyses the reaction a D-hexose + ATP = a D-hexose 6-phosphate + ADP + H(+). The catalysed reaction is D-mannose + ATP = D-mannose 6-phosphate + ADP + H(+). The enzyme catalyses D-fructose + ATP = D-fructose 6-phosphate + ADP + H(+). It carries out the reaction D-glucose + ATP = D-glucose 6-phosphate + ADP + H(+). The protein operates within carbohydrate metabolism; hexose metabolism. Its pathway is carbohydrate degradation; glycolysis; D-glyceraldehyde 3-phosphate and glycerone phosphate from D-glucose: step 1/4. Its function is as follows. Catalyzes the phosphorylation of hexose (six-carbon sugars) to hexose 6-phosphate. Phosphorylates D-glucose, D-fructose and D-mannose. Compared to hxk1, has a much higher affinity for D-glucose. Constitutes the initial enzyme of glycolysis by catalyzing the phosphorylation of glucose to D-glucose 6-phosphate. This Schizosaccharomyces pombe (strain 972 / ATCC 24843) (Fission yeast) protein is Hexokinase-2.